Reading from the N-terminus, the 689-residue chain is Elongation factor G (689 aa).

A tr-type G domain is found at 8-282; sequence ERTRNIGIMA…GVVAYMPSPL (275 aa). GTP-binding positions include 17–24, 81–85, and 135–138; these read AHIDAGKT, DTPGH, and NKMD.

It belongs to the TRAFAC class translation factor GTPase superfamily. Classic translation factor GTPase family. EF-G/EF-2 subfamily.

The protein resides in the cytoplasm. In terms of biological role, catalyzes the GTP-dependent ribosomal translocation step during translation elongation. During this step, the ribosome changes from the pre-translocational (PRE) to the post-translocational (POST) state as the newly formed A-site-bound peptidyl-tRNA and P-site-bound deacylated tRNA move to the P and E sites, respectively. Catalyzes the coordinated movement of the two tRNA molecules, the mRNA and conformational changes in the ribosome. The chain is Elongation factor G from Alkaliphilus metalliredigens (strain QYMF).